Reading from the N-terminus, the 128-residue chain is MQTAASSVVGLSAVLPAAVKGRSLQIQAPRRVALRVRAAAAAVAVEAAEVDYSSNISVFPMEACDLIGGEACNVQMYPEAKLSSSAAVAVSRAAAEEVDRDYLSYDEPTTVFPEEACDDLGGEFCKAT.

2 repeat units span residues 58–72 and 111–125. A 2 X 15 AA approximate repeats region spans residues 58–125; the sequence is VFPMEACDLI…ACDDLGGEFC (68 aa).

In terms of assembly, component of high molecular weight thylakoid LFNRs-containing protein complexes containing LIR1, LFNR1, LFNR2, TIC62 and TROL proteins. Interacts directly with LFNR1 and LFNR2; LIR1 increases the affinity of LFNR1 and LFNR2 for TIC62 and subsequent thylakoid relocalization. Post-translationally, may form interchain disulfide bonds with LFNR1 and LFNR2.

The protein resides in the plastid. It is found in the chloroplast thylakoid membrane. Its subcellular location is the chloroplast envelope. It localises to the chloroplast stroma. Its function is as follows. Thylakoid-determinant subunit of high molecular weight LFNRs-containing protein complexes. The polypeptide is Light-regulated protein, chloroplastic (LIR1) (Oryza sativa subsp. japonica (Rice)).